We begin with the raw amino-acid sequence, 1471 residues long: Myosin-4 (1471 aa).

One can recognise a Myosin N-terminal SH3-like domain in the interval 4–57; that stretch reads EVGTKCWYPHKEQGWIGGEVTKNDFFEGTFHLELKLEDGETVSIETNSFENDDD. The 707-residue stretch at 71–777 folds into the Myosin motor domain; it reads ESTDDLTTLS…MLAFLEKLRT (707 aa). Residue 165 to 172 coordinates ATP; it reads GESGAGKT. Positions 647–669 are actin-binding; the sequence is LGELMAIINSTNVHYIRCIKPNS. 5 IQ domains span residues 781 to 801, 804 to 824, 829 to 849, 876 to 898, and 899 to 928; these read NEICIIIQKKIRARYYRLQYL, MESIKKCQSQIRSLLVRTRVD, TRAAILLQTNIRALWKREYYR, MLMAAVIIQSYIRSYGHKTDYRT, and LKRSSILVQSAMRMQLARRRYIVLQKEVEE. Residues 938-1063 are a coiled coil; the sequence is GLLEEAIEFK…LAFIENVIAQ (126 aa). One can recognise a Dilute domain in the interval 1164-1419; it reads SKVLLTVESI…LNYLANVIKR (256 aa).

Belongs to the TRAFAC class myosin-kinesin ATPase superfamily. Myosin family. Interacts with SHE2 and SHE3.

Its subcellular location is the bud. Its function is as follows. Part of the mRNA localization machinery that restricts accumulation of certain proteins to the bud and in the daughter cell. Recruited to specific mRNAs including the ASH1 mRNA, coding for a repressor of the HO endonuclease, via its interaction with SHE3. This chain is Myosin-4 (MYO4), found in Saccharomyces cerevisiae (strain ATCC 204508 / S288c) (Baker's yeast).